Consider the following 301-residue polypeptide: uncharacterized protein (301 aa).

A signal peptide spans 1 to 28 (MFFREDKSVAFRLRSAALSGCATGQSDA).

This is an uncharacterized protein from Treponema pallidum (strain Nichols).